The sequence spans 320 residues: GTP 3',8-cyclase (320 aa).

The region spanning Q5–A225 is the Radical SAM core domain. R14 provides a ligand contact to GTP. Residues C21 and C25 each coordinate [4Fe-4S] cluster. Residue Y27 coordinates S-adenosyl-L-methionine. C28 provides a ligand contact to [4Fe-4S] cluster. Residue R64 coordinates GTP. An S-adenosyl-L-methionine-binding site is contributed by G68. T95 serves as a coordination point for GTP. Position 119 (S119) interacts with S-adenosyl-L-methionine. K155 provides a ligand contact to GTP. Position 189 (M189) interacts with S-adenosyl-L-methionine. C248 and C251 together coordinate [4Fe-4S] cluster. R253 to R255 is a binding site for GTP. [4Fe-4S] cluster is bound at residue C265.

Belongs to the radical SAM superfamily. MoaA family. In terms of assembly, monomer and homodimer. It depends on [4Fe-4S] cluster as a cofactor.

The enzyme catalyses GTP + AH2 + S-adenosyl-L-methionine = (8S)-3',8-cyclo-7,8-dihydroguanosine 5'-triphosphate + 5'-deoxyadenosine + L-methionine + A + H(+). The protein operates within cofactor biosynthesis; molybdopterin biosynthesis. Catalyzes the cyclization of GTP to (8S)-3',8-cyclo-7,8-dihydroguanosine 5'-triphosphate. This Campylobacter jejuni subsp. jejuni serotype O:6 (strain 81116 / NCTC 11828) protein is GTP 3',8-cyclase.